The sequence spans 694 residues: Elongation factor G (694 aa).

Residues 8–287 enclose the tr-type G domain; that stretch reads EDYRNFGIMA…AVVEFLPAPT (280 aa). Residues 17–24, 86–90, and 140–143 each bind GTP; these read AHIDAGKT, DTPGH, and NKMD.

The protein belongs to the TRAFAC class translation factor GTPase superfamily. Classic translation factor GTPase family. EF-G/EF-2 subfamily.

The protein resides in the cytoplasm. Functionally, catalyzes the GTP-dependent ribosomal translocation step during translation elongation. During this step, the ribosome changes from the pre-translocational (PRE) to the post-translocational (POST) state as the newly formed A-site-bound peptidyl-tRNA and P-site-bound deacylated tRNA move to the P and E sites, respectively. Catalyzes the coordinated movement of the two tRNA molecules, the mRNA and conformational changes in the ribosome. The chain is Elongation factor G from Brucella ovis (strain ATCC 25840 / 63/290 / NCTC 10512).